A 221-amino-acid polypeptide reads, in one-letter code: uncharacterized protein (221 aa).

The region spanning 1–189 (MDSGKDTNGY…NVVYCSEKAV (189 aa)) is the Peptidase S8 domain.

The protein belongs to the peptidase S8 family.

This is an uncharacterized protein from Aquifex aeolicus (strain VF5).